The primary structure comprises 211 residues: Large ribosomal subunit protein bL25 (211 aa).

Residues V175 to E211 form a disordered region. Acidic residues predominate over residues V179–A194.

It belongs to the bacterial ribosomal protein bL25 family. CTC subfamily. In terms of assembly, part of the 50S ribosomal subunit; part of the 5S rRNA/L5/L18/L25 subcomplex. Contacts the 5S rRNA. Binds to the 5S rRNA independently of L5 and L18.

Functionally, this is one of the proteins that binds to the 5S RNA in the ribosome where it forms part of the central protuberance. The polypeptide is Large ribosomal subunit protein bL25 (Kocuria rhizophila (strain ATCC 9341 / DSM 348 / NBRC 103217 / DC2201)).